We begin with the raw amino-acid sequence, 159 residues long: Ribosomal RNA large subunit methyltransferase H (159 aa).

Residues leucine 76, glycine 108, and 127 to 132 (FGRMTY) each bind S-adenosyl-L-methionine.

This sequence belongs to the RNA methyltransferase RlmH family. In terms of assembly, homodimer.

It localises to the cytoplasm. It carries out the reaction pseudouridine(1915) in 23S rRNA + S-adenosyl-L-methionine = N(3)-methylpseudouridine(1915) in 23S rRNA + S-adenosyl-L-homocysteine + H(+). In terms of biological role, specifically methylates the pseudouridine at position 1915 (m3Psi1915) in 23S rRNA. The chain is Ribosomal RNA large subunit methyltransferase H from Carboxydothermus hydrogenoformans (strain ATCC BAA-161 / DSM 6008 / Z-2901).